The sequence spans 487 residues: Chromosomal replication initiator protein DnaA (487 aa).

The interval 1 to 92 is domain I, interacts with DnaA modulators; the sequence is MTIKGGVVSQ…SELWTANDAT (92 aa). The tract at residues 92 to 144 is domain II; the sequence is TGRRLDLKSRLEFESVGGAGYEAKAEPIEIVLPVSSDVPALAPTNGSKPSPVQ. Positions 145-367 are domain III, AAA+ region; the sequence is GLQERFTFDT…GALNTLSARA (223 aa). ATP-binding residues include glycine 189, glycine 191, lysine 192, and threonine 193. Residues 368–487 are domain IV, binds dsDNA; it reads GEGVSRLTLE…LETITRKLRG (120 aa).

Belongs to the DnaA family. As to quaternary structure, oligomerizes as a right-handed, spiral filament on DNA at oriC.

It localises to the cytoplasm. Plays an essential role in the initiation and regulation of chromosomal replication. ATP-DnaA binds to the origin of replication (oriC) to initiate formation of the DNA replication initiation complex once per cell cycle. Binds the DnaA box (a 9 base pair repeat at the origin) and separates the double-stranded (ds)DNA. Forms a right-handed helical filament on oriC DNA; dsDNA binds to the exterior of the filament while single-stranded (ss)DNA is stabiized in the filament's interior. The ATP-DnaA-oriC complex binds and stabilizes one strand of the AT-rich DNA unwinding element (DUE), permitting loading of DNA polymerase. After initiation quickly degrades to an ADP-DnaA complex that is not apt for DNA replication. Binds acidic phospholipids. The chain is Chromosomal replication initiator protein DnaA from Caulobacter sp. (strain K31).